The sequence spans 364 residues: Sorbitol dehydrogenase (364 aa).

Cys54 is a Zn(2+) binding site. Tyr60 contacts substrate. His79 and Glu80 together coordinate Zn(2+). Residue Glu165 participates in substrate binding. NAD(+)-binding positions include Ile193, Asp213, Arg218, 284–286 (VGM), and 308–310 (VFR). Substrate-binding residues include Arg310 and Tyr311.

The protein belongs to the zinc-containing alcohol dehydrogenase family. Homotetramer. It depends on Zn(2+) as a cofactor. Mostly expressed in dry seeds and leaves, and, to a lower extent, in roots, stems, flowers and siliques (at protein level).

The protein localises to the mitochondrion membrane. It is found in the cell membrane. It localises to the cytoplasm. Its subcellular location is the cytosol. The enzyme catalyses keto-D-fructose + NADH + H(+) = D-sorbitol + NAD(+). It carries out the reaction ribitol + NAD(+) = D-ribulose + NADH + H(+). It catalyses the reaction xylitol + NAD(+) = D-xylulose + NADH + H(+). In terms of biological role, polyol dehydrogenase that catalyzes the NAD(+)-dependent oxidation of various sugar alcohols. Is mostly active with D-sorbitol (D-glucitol), ribitol and xylitol as substrates, leading to the C2-oxidized products D-fructose, D-ribulose and D-xylulose, respectively. To a lesser extent, can also oxidize arabitol, mannitol, lactitol and maltitol in vitro. Is required for sorbitol metabolism. Cannot use NADP(+) as the electron acceptor. The chain is Sorbitol dehydrogenase (SDH) from Arabidopsis thaliana (Mouse-ear cress).